A 123-amino-acid chain; its full sequence is Large ribosomal subunit protein bL17 (123 aa).

This sequence belongs to the bacterial ribosomal protein bL17 family. Part of the 50S ribosomal subunit. Contacts protein L32.

The polypeptide is Large ribosomal subunit protein bL17 (Borrelia hermsii (strain HS1 / DAH)).